The chain runs to 352 residues: Biotin synthase (352 aa).

The 219-residue stretch at 44 to 262 folds into the Radical SAM core domain; sequence NRVQVSTLLS…LAVARILMPK (219 aa). Residues Cys-59, Cys-63, and Cys-66 each contribute to the [4Fe-4S] cluster site. Residues Cys-103, Cys-134, Cys-194, and Arg-266 each coordinate [2Fe-2S] cluster.

Belongs to the radical SAM superfamily. Biotin synthase family. In terms of assembly, homodimer. The cofactor is [4Fe-4S] cluster. [2Fe-2S] cluster serves as cofactor.

The catalysed reaction is (4R,5S)-dethiobiotin + (sulfur carrier)-SH + 2 reduced [2Fe-2S]-[ferredoxin] + 2 S-adenosyl-L-methionine = (sulfur carrier)-H + biotin + 2 5'-deoxyadenosine + 2 L-methionine + 2 oxidized [2Fe-2S]-[ferredoxin]. It functions in the pathway cofactor biosynthesis; biotin biosynthesis; biotin from 7,8-diaminononanoate: step 2/2. Its function is as follows. Catalyzes the conversion of dethiobiotin (DTB) to biotin by the insertion of a sulfur atom into dethiobiotin via a radical-based mechanism. The sequence is that of Biotin synthase from Pseudomonas putida (strain GB-1).